The primary structure comprises 235 residues: KNMITGATQMDGAILVVSAADGPMPQTREHILLAGQVGVPNIVVFMNKQDQVDDEELLELVELEIRELLSSYDFPGDDIPVTAGSALKAVEQLLSDPNTARGSDEWVDKIHALMDDGDKYIPTPSVKVDKPFLMAVEDVFSITGRGTVATGRIERGLVKVGETVQLVGIADTRETTVTGVEMFQKTLDSGMAGDNVGVLLRGVQKEDIERGMVLAKSGSITPHTEFESEVYVLNK.

Residues 1–125 (KNMITGATQM…DGDKYIPTPS (125 aa)) enclose the tr-type G domain. A GTP-binding site is contributed by 47-50 (NKQD).

The protein belongs to the TRAFAC class translation factor GTPase superfamily. Classic translation factor GTPase family. EF-Tu/EF-1A subfamily. Monomer.

It localises to the cytoplasm. It carries out the reaction GTP + H2O = GDP + phosphate + H(+). Functionally, GTP hydrolase that promotes the GTP-dependent binding of aminoacyl-tRNA to the A-site of ribosomes during protein biosynthesis. The sequence is that of Elongation factor Tu (tufA) from Leptolyngbya boryana (Plectonema boryanum).